The chain runs to 249 residues: Triosephosphate isomerase (249 aa).

Substrate-binding residues include N10 and K12. The active-site Electrophile is the H94. E166 serves as the catalytic Proton acceptor.

It belongs to the triosephosphate isomerase family. In terms of assembly, homodimer. In terms of processing, the N-terminus is blocked.

It carries out the reaction D-glyceraldehyde 3-phosphate = dihydroxyacetone phosphate. The protein operates within carbohydrate biosynthesis; gluconeogenesis. It functions in the pathway carbohydrate degradation; glycolysis; D-glyceraldehyde 3-phosphate from glycerone phosphate: step 1/1. This is Triosephosphate isomerase (TPI1) from Paracoccidioides lutzii (strain ATCC MYA-826 / Pb01) (Paracoccidioides brasiliensis).